The following is a 937-amino-acid chain: Beta-mannosidase A (937 aa).

Residues 1-23 form the signal peptide; the sequence is MRALPTTATTLLGVLFFPSASRS. N-linked (GlcNAc...) asparagine glycans are attached at residues N42, N82, N250, N285, N319, N329, and N350. E482 serves as the catalytic Proton donor. N-linked (GlcNAc...) asparagine glycans are attached at residues N553, N612, N743, and N796.

The protein belongs to the glycosyl hydrolase 2 family. Beta-mannosidase A subfamily. In terms of assembly, homodimer. N-glycosylated.

It localises to the secreted. The enzyme catalyses Hydrolysis of terminal, non-reducing beta-D-mannose residues in beta-D-mannosides.. It participates in glycan metabolism; N-glycan degradation. In terms of biological role, exoglycosidase that cleaves the single beta-linked mannose residue from the non-reducing end of beta-mannosidic oligosaccharides of various complexity and length. Involved in the degradation of polymeric mannan and galactomannan. Releases the terminal mannose residue from mannotriose and is somewaht less active on other mannooligosaccharides. The sequence is that of Beta-mannosidase A (mndA) from Aspergillus aculeatus.